A 154-amino-acid polypeptide reads, in one-letter code: Protein X (154 aa).

Residues 28 to 48 (RPLPGPLGTLPPASPPAVPTD) are disordered. A mitochondrial targeting sequence region spans residues 68 to 117 (PCALRFTSARRMETTVNAHGNLPKVLHKRTLGLSAMSTTDLEAYFKDCVF).

This sequence belongs to the orthohepadnavirus protein X family. May form homodimer. May interact with host CEBPA, CFLAR, CREB1, DDB1, E4F1, HBXIP, HSPD1/HSP60, NFKBIA, POLR2E and SMAD4. Interacts with host SMC5-SMC6 complex and induces its degradation. Interacts with host TRPC4AP; leading to prevent ubiquitination of TRPC4AP. Interacts with host PLSCR1; this interaction promotes ubiquitination and degradation of HBx and impairs HBx-mediated cell proliferation. In terms of processing, a fraction may be phosphorylated in insect cells and HepG2 cells, a human hepatoblastoma cell line. Phosphorylated in vitro by host protein kinase C or mitogen-activated protein kinase. N-acetylated in insect cells.

It localises to the host cytoplasm. Its subcellular location is the host nucleus. The protein localises to the host mitochondrion. In terms of biological role, multifunctional protein that plays a role in silencing host antiviral defenses and promoting viral transcription. Does not seem to be essential for HBV infection. May be directly involved in development of cirrhosis and liver cancer (hepatocellular carcinoma). Most of cytosolic activities involve modulation of cytosolic calcium. The effect on apoptosis is controversial depending on the cell types in which the studies have been conducted. May induce apoptosis by localizing in mitochondria and causing loss of mitochondrial membrane potential. May also modulate apoptosis by binding host CFLAR, a key regulator of the death-inducing signaling complex (DISC). Promotes viral transcription by using the host E3 ubiquitin ligase DDB1 to target the SMC5-SMC6 complex to proteasomal degradation. This host complex would otherwise bind to viral episomal DNA, and prevents its transcription. Moderately stimulates transcription of many different viral and cellular transcription elements. Promoters and enhancers stimulated by HBx contain DNA binding sites for NF-kappa-B, AP-1, AP-2, c-EBP, ATF/CREB, or the calcium-activated factor NF-AT. This is Protein X from Hepatitis B virus genotype B2 subtype adw (isolate China/patient4/1996) (HBV-B).